Reading from the N-terminus, the 240-residue chain is MGKAQPLPILITGGGRRIGLALAWHFINQKQPVIVSYRTHYPAIDGLIKAGAQCIQADFSTNDGVMAFADEVLKSTHGLRAILHNASAWMAEKLGAPLADVLACMMQIHVNTPYLLNHALERLLRGHGHAASDIIHFTDYVVERGSDKHIAYAASKAALDNMTRSFARKLAPEVKVNSIAPSLILFNEHDDAEYRQQALNKSLMKTAPGEKEVIDLVDYLLTSCFVTGRSFPLDGGRHLR.

Tyrosine 152 (proton acceptor) is an active-site residue.

The protein belongs to the short-chain dehydrogenases/reductases (SDR) family. FolM subfamily.

The enzyme catalyses (6S)-5,6,7,8-tetrahydrofolate + NADP(+) = 7,8-dihydrofolate + NADPH + H(+). The catalysed reaction is 7,8-dihydromonapterin + NADPH + H(+) = 5,6,7,8-tetrahydromonapterin + NADP(+). In terms of biological role, catalyzes the reduction of dihydromonapterin to tetrahydromonapterin. Also has lower activity with dihydrofolate. This chain is Dihydromonapterin reductase (folM), found in Shigella boydii serotype 4 (strain Sb227).